The primary structure comprises 28 residues: GLKDWWNKHKDKIIAVAKEMGKAGLQAA.

Residue alanine 28 is modified to Alanine amide.

As to expression, expressed by the venom gland.

Its subcellular location is the secreted. Functionally, shows a broad spectrum of activity against both Gram-positive and Gram-negative bacteria. Also has antimicrobial activity against S.cerevisiae. Has insecticidal and non-hemolytic activity. This is U1-poneritoxin-Da4a from Dinoponera australis (Giant neotropical hunting ant).